We begin with the raw amino-acid sequence, 249 residues long: MNKPFSASILTLYPEMFPGPLGHSLAGRALENNIWSLETVAIRDFANDRHHTVDDTPSGGGAGMVMRADILARALDHSCEKHPDLPVLAMTPRGYPLTQSRVRQLSEGAGAIIICGRFEGMDERLFEKRAIEPVSIGDYILSGGEMAALTLLDACIRLIPGVMGKITSGEDESFETGLLEYPQYTRPVEWEGLSIPEVLRSGNHAHIKAWRQAMAERDTRLRRPDLWERYRSVQASRPLARNKKDRNEK.

Residues Gly116 and 136 to 141 contribute to the S-adenosyl-L-methionine site; that span reads IGDYIL.

This sequence belongs to the RNA methyltransferase TrmD family. As to quaternary structure, homodimer.

The protein localises to the cytoplasm. It catalyses the reaction guanosine(37) in tRNA + S-adenosyl-L-methionine = N(1)-methylguanosine(37) in tRNA + S-adenosyl-L-homocysteine + H(+). In terms of biological role, specifically methylates guanosine-37 in various tRNAs. The polypeptide is tRNA (guanine-N(1)-)-methyltransferase (Zymomonas mobilis subsp. mobilis (strain ATCC 31821 / ZM4 / CP4)).